Consider the following 246-residue polypeptide: Nuclear transcription factor Y subunit C-2 (246 aa).

2 disordered regions span residues 1–35 (MDNQ…AVPH) and 205–246 (QQGA…PSSE). Over residues 9 to 21 (AGQPAAAGAGAPV) the composition is skewed to low complexity.

This sequence belongs to the NFYC/HAP5 subunit family. Heterotrimeric transcription factor composed of three components, NF-YA, NF-YB and NF-YC. NF-YB and NF-YC must interact and dimerize for NF-YA association and DNA binding. Interacts with NFYB8, NFYB10 and HD5/NFYB11.

It is found in the nucleus. Its subcellular location is the cytoplasm. In terms of biological role, probable transcription factor involved in the regulation of flowering time under long day (LD) conditions. Functions as a repressor of flowering, independently of HD1 and GHD7. Controls flowering time by negatively regulating the expression of EHD1 and HD3A. Component of the NF-Y/HAP transcription factor complex. The polypeptide is Nuclear transcription factor Y subunit C-2 (Oryza sativa subsp. japonica (Rice)).